A 1905-amino-acid chain; its full sequence is Low-density lipoprotein receptor-related protein 4 (1905 aa).

The signal sequence occupies residues 1-20; it reads MRRWWGALLLGALLCAHGTA. At 21–1723 the chain is on the extracellular side; it reads SNLECACGRS…VPAAPGEGLH (1703 aa). LDL-receptor class A domains follow at residues 26-67, 70-106, 109-144, 147-183, 190-226, 230-266, 269-305, and 311-350; these read ACGR…DGCT, TCSP…QDCP, ECEE…EQCD, KCSD…ESCP, PCNL…SDCS, PCRS…RNCT, MCTA…ENCE, and QCAS…QNCR. 30 cysteine pairs are disulfide-bonded: C27-C44, C34-C57, C51-C66, C71-C83, C78-C96, C90-C105, C110-C122, C117-C135, C129-C143, C148-C160, C155-C173, C167-C182, C191-C203, C198-C216, C210-C225, C231-C243, C238-C256, C250-C265, C270-C282, C277-C295, C289-C304, C312-C324, C319-C337, C331-C349, C358-C369, C365-C378, C380-C393, C399-C409, C405-C418, and C420-C433. The N-linked (GlcNAc...) asparagine glycan is linked to N264. In terms of domain architecture, EGF-like 1; atypical spans 354–394; it reads GEENCNVNNGGCAQKCQMIRGAVQCTCHTGYRLTEDGRTCQ. Residues 395–434 enclose the EGF-like 2; calcium-binding domain; the sequence is DVNECAEEGYCSQGCTNSEGAFQCWCEAGYELRPDRRSCK. LDL-receptor class B repeat units follow at residues 480-522, 523-565, 566-609, 610-652, and 653-693; these read ELVF…DWVH, DKLY…HPME, GTIY…DYAG, RRMY…FEDS, and LYWT…LHPQ. N-linked (GlcNAc...) asparagine glycosylation is present at N498. One can recognise an EGF-like 3 domain in the interval 698-737; it reads GKNRCGDNNGGCTHLCLPSGQNYTCACPTGFRKINSHACA. 3 disulfide bridges follow: C702–C713, C709–C722, and C724–C736. N-linked (GlcNAc...) asparagine glycosylation occurs at N719. LDL-receptor class B repeat units lie at residues 785–827, 828–870, 871–914, 915–956, and 957–998; these read DHVY…DWVT, NKLY…EPMG, GYMY…DYGS, QRLY…LYGQ, and RIYW…FHRQ. N901 carries an N-linked (GlcNAc...) asparagine glycan. The N-linked (GlcNAc...) asparagine glycan is linked to N1077. LDL-receptor class B repeat units follow at residues 1093 to 1135, 1136 to 1178, 1179 to 1222, 1223 to 1263, 1264 to 1306, 1397 to 1439, 1440 to 1482, 1483 to 1526, 1527 to 1568, and 1569 to 1610; these read GKVY…DAIG, RKVY…YHEM, GFMY…DKTS, SQLL…LLDS, YIYW…DRAQ, GKVY…DWVA, RNLY…FPRK, GYLF…DYDT, RRIY…QDRW, and IYWT…SPQR. N-linked (GlcNAc...) asparagine glycosylation is found at N1415 and N1467. A disordered region spans residues 1659 to 1696; sequence PRATSLNEKSPVLPNTLPTTLHSSTTRTRTSPEGAEGR. The segment covering 1671-1690 has biased composition (low complexity); sequence LPNTLPTTLHSSTTRTRTSP. A helical transmembrane segment spans residues 1724–1746; sequence VSYAVGGLLSVLLILLVTAALML. At 1747–1905 the chain is on the cytoplasmic side; the sequence is YRHRKSKFTD…ERKLSSESQV (159 aa). A disordered region spans residues 1853–1905; the sequence is SSGSLDDTETEQLLQEEQSECSSVHTATTPERRGSLPDTGWKHERKLSSESQV. Residues 1872 to 1881 are compositionally biased toward polar residues; that stretch reads ECSSVHTATT. Basic and acidic residues predominate over residues 1882 to 1905; it reads PERRGSLPDTGWKHERKLSSESQV.

It belongs to the LDLR family. In terms of assembly, homooligomer. Interacts with MUSK; the heterodimer forms an AGRIN receptor complex that binds AGRIN resulting in activation of MUSK. Interacts (via the extracellular domain) with SOST; the interaction facilitates the inhibition of Wnt signaling. Interacts with MESD; the interaction promotes glycosylation of LRP4 and its cell-surface expression. N-glycosylation is required for cell surface location. As to expression, expressed in different regions of the brain, mainly in the olfactory bulb, at lower level in the cerebral cortex and hippocampus.

It is found in the cell membrane. Functionally, mediates SOST-dependent inhibition of bone formation. Functions as a specific facilitator of SOST-mediated inhibition of Wnt signaling. Plays a key role in the formation and the maintenance of the neuromuscular junction (NMJ), the synapse between motor neuron and skeletal muscle. Directly binds AGRIN and recruits it to the MUSK signaling complex. Mediates the AGRIN-induced phosphorylation of MUSK, the kinase of the complex. The activation of MUSK in myotubes induces the formation of NMJ by regulating different processes including the transcription of specific genes and the clustering of AChR in the postsynaptic membrane. Alternatively, may be involved in the negative regulation of the canonical Wnt signaling pathway, being able to antagonize the LRP6-mediated activation of this pathway. More generally, has been proposed to function as a cell surface endocytic receptor binding and internalizing extracellular ligands for degradation by lysosomes. Plays an essential role in the process of digit differentiation. The sequence is that of Low-density lipoprotein receptor-related protein 4 (Lrp4) from Rattus norvegicus (Rat).